Here is a 459-residue protein sequence, read N- to C-terminus: Disease resistance protein CHL1 (459 aa).

The 155-residue stretch at 16–170 folds into the TIR domain; that stretch reads REVDVFLSFC…QIARDISLVV (155 aa). E89 is an active-site residue. Residues 191–401 form the NB-ARC domain; the sequence is VYDLLALEVN…LLKLKAKQGG (211 aa). Positions 429–440 are enriched in basic and acidic residues; sequence ERKESSQDKSQQ. A disordered region spans residues 429–459; sequence ERKESSQDKSQQESEVAADILIGKESSQDKQ.

As to expression, mostly expressed in leaves, stems and roots, and, to a lower extent, in flowers and siliques.

Its subcellular location is the cytoplasm. It carries out the reaction NAD(+) + H2O = ADP-D-ribose + nicotinamide + H(+). In terms of biological role, confers resistance to low temperatures by limiting chloroplast damage and cell death, thus maintaining growth homeostasis. This Arabidopsis thaliana (Mouse-ear cress) protein is Disease resistance protein CHL1.